The primary structure comprises 413 residues: Serine hydroxymethyltransferase (413 aa).

(6S)-5,6,7,8-tetrahydrofolate is bound by residues Leu119 and 123–125 (GHL). An N6-(pyridoxal phosphate)lysine modification is found at Lys228. Residue 351-353 (SPF) coordinates (6S)-5,6,7,8-tetrahydrofolate.

Belongs to the SHMT family. Homodimer. Requires pyridoxal 5'-phosphate as cofactor.

The protein resides in the cytoplasm. It carries out the reaction (6R)-5,10-methylene-5,6,7,8-tetrahydrofolate + glycine + H2O = (6S)-5,6,7,8-tetrahydrofolate + L-serine. The protein operates within one-carbon metabolism; tetrahydrofolate interconversion. It participates in amino-acid biosynthesis; glycine biosynthesis; glycine from L-serine: step 1/1. In terms of biological role, catalyzes the reversible interconversion of serine and glycine with tetrahydrofolate (THF) serving as the one-carbon carrier. This reaction serves as the major source of one-carbon groups required for the biosynthesis of purines, thymidylate, methionine, and other important biomolecules. Also exhibits THF-independent aldolase activity toward beta-hydroxyamino acids, producing glycine and aldehydes, via a retro-aldol mechanism. This Clostridium botulinum (strain ATCC 19397 / Type A) protein is Serine hydroxymethyltransferase.